A 439-amino-acid chain; its full sequence is MVWTSHPVKRLAGAIRAPGDKSCSHRALIFGGLAEGESRFSGLLEGDDVLRTGQAMEAMGATVTRTGPGSWDVTGVGAKGLSSPKGVLDFGNSGTGSRLLMGVMAGYDLTASLTGDASLCSRPMNRVLNPLRQMGLKDTAGPDGKLPFTLTGSKSLKAIRYAPPQASAQVKSAVLLAGLNAEGETVVAEAKATRDHTERMLQGFGATLSFRMAPGGVHEIALKGGQRLRGLDAEIPGDPSSAAFLIAAGLLSPQGDVLVEGVMSNPTRSGFYDVADLMGASLGADERGEAAGERLIDIHSGYAGLKGIHVPERLVASMIDEFPILAVLAAFATGETRVTGAEELRVKESDRIGAVVAMLRVNGVEVEETEDGFTVQGCGGRVPGGGLVETRHDHRIAMSALVMGTAAQKPVSVDDISMIDTSYPEFMSHMATLGADIRS.

Lysine 21, serine 22, and arginine 26 together coordinate 3-phosphoshikimate. Residue lysine 21 coordinates phosphoenolpyruvate. Phosphoenolpyruvate is bound by residues glycine 94 and arginine 122. Serine 167, glutamine 169, aspartate 320, and lysine 347 together coordinate 3-phosphoshikimate. Position 169 (glutamine 169) interacts with phosphoenolpyruvate. Aspartate 320 acts as the Proton acceptor in catalysis. Positions 351 and 395 each coordinate phosphoenolpyruvate.

This sequence belongs to the EPSP synthase family. As to quaternary structure, monomer.

It localises to the cytoplasm. It catalyses the reaction 3-phosphoshikimate + phosphoenolpyruvate = 5-O-(1-carboxyvinyl)-3-phosphoshikimate + phosphate. It functions in the pathway metabolic intermediate biosynthesis; chorismate biosynthesis; chorismate from D-erythrose 4-phosphate and phosphoenolpyruvate: step 6/7. Catalyzes the transfer of the enolpyruvyl moiety of phosphoenolpyruvate (PEP) to the 5-hydroxyl of shikimate-3-phosphate (S3P) to produce enolpyruvyl shikimate-3-phosphate and inorganic phosphate. The polypeptide is 3-phosphoshikimate 1-carboxyvinyltransferase (Hyphomonas neptunium (strain ATCC 15444)).